Here is a 310-residue protein sequence, read N- to C-terminus: L-lactate dehydrogenase (310 aa).

Residues Val11, Asp32, Tyr62, and 76-77 (GV) each bind NAD(+). Substrate is bound by residues Gln79, Arg85, and 117–120 (NPVD). NAD(+) contacts are provided by residues 115 to 117 (ATN) and Ser140. 145–148 (DTAR) is a binding site for substrate. Beta-D-fructose 1,6-bisphosphate contacts are provided by Arg150 and His165. The active-site Proton acceptor is His172. The residue at position 218 (Tyr218) is a Phosphotyrosine. Thr227 is a binding site for substrate.

It belongs to the LDH/MDH superfamily. LDH family. In terms of assembly, homotetramer.

It is found in the cytoplasm. It catalyses the reaction (S)-lactate + NAD(+) = pyruvate + NADH + H(+). The protein operates within fermentation; pyruvate fermentation to lactate; (S)-lactate from pyruvate: step 1/1. Its activity is regulated as follows. Allosterically activated by fructose 1,6-bisphosphate (FBP). Functionally, catalyzes the conversion of lactate to pyruvate. The polypeptide is L-lactate dehydrogenase (Thermus thermophilus (strain ATCC BAA-163 / DSM 7039 / HB27)).